Here is a 183-residue protein sequence, read N- to C-terminus: Shikimate kinase (183 aa).

15–20 serves as a coordination point for ATP; that stretch reads GSGKST. A Mg(2+)-binding site is contributed by serine 19. Residues aspartate 37, arginine 61, and glycine 85 each contribute to the substrate site. An ATP-binding site is contributed by arginine 123. Arginine 142 lines the substrate pocket.

It belongs to the shikimate kinase family. In terms of assembly, monomer. Mg(2+) is required as a cofactor.

It is found in the cytoplasm. It carries out the reaction shikimate + ATP = 3-phosphoshikimate + ADP + H(+). It participates in metabolic intermediate biosynthesis; chorismate biosynthesis; chorismate from D-erythrose 4-phosphate and phosphoenolpyruvate: step 5/7. Functionally, catalyzes the specific phosphorylation of the 3-hydroxyl group of shikimic acid using ATP as a cosubstrate. In Paracidovorax citrulli (strain AAC00-1) (Acidovorax citrulli), this protein is Shikimate kinase.